A 274-amino-acid polypeptide reads, in one-letter code: tRNA (guanine-N(7)-)-methyltransferase (274 aa).

The tract at residues 16–40 is disordered; sequence ASASRGAATGSRGVAPAVPRGGAPA. S-adenosyl-L-methionine-binding residues include Glu106, Glu131, Asp158, and Asp181. Asp181 is a catalytic residue. Residues Lys185, Asp217, and 252–255 each bind substrate; that span reads TKFE.

This sequence belongs to the class I-like SAM-binding methyltransferase superfamily. TrmB family.

The enzyme catalyses guanosine(46) in tRNA + S-adenosyl-L-methionine = N(7)-methylguanosine(46) in tRNA + S-adenosyl-L-homocysteine. The protein operates within tRNA modification; N(7)-methylguanine-tRNA biosynthesis. In terms of biological role, catalyzes the formation of N(7)-methylguanine at position 46 (m7G46) in tRNA. This chain is tRNA (guanine-N(7)-)-methyltransferase, found in Verminephrobacter eiseniae (strain EF01-2).